The primary structure comprises 493 residues: Cytoplasmic tRNA 2-thiolation protein 2 (493 aa).

Ser-489 carries the phosphoserine modification.

This sequence belongs to the CTU2/NCS2 family. Interacts with NCS6 and URM1. May act by forming a heterodimer with NCS6.

The protein localises to the cytoplasm. It functions in the pathway tRNA modification; 5-methoxycarbonylmethyl-2-thiouridine-tRNA biosynthesis. Functionally, plays a central role in 2-thiolation of mcm(5)S(2)U at tRNA wobble positions of tRNA(Lys), tRNA(Glu) and tRNA(Gln). May act by forming a heterodimer with NCS6 that ligates sulfur from thiocarboxylated URM1 onto the uridine of tRNAs at wobble position. Prior mcm(5) tRNA modification by the elongator complex is required for 2-thiolation. May also be involved in protein urmylation. This chain is Cytoplasmic tRNA 2-thiolation protein 2, found in Saccharomyces cerevisiae (strain RM11-1a) (Baker's yeast).